We begin with the raw amino-acid sequence, 617 residues long: Prothrombin (617 aa).

The first 24 residues, 1–24 (MLHVRGLGLPGCLALAALASLVHS), serve as a signal peptide directing secretion. A propeptide spanning residues 25-43 (QHVFLAPQQALSLLQRVRR) is cleaved from the precursor. The region spanning 44–90 (ANSGFLEELRKGNLERECVEEQCSYEEAFEALESPQDTDVFWAKYTV) is the Gla domain. 4-carboxyglutamate is present on residues Glu50, Glu51, Glu58, Glu60, Glu63, Glu64, Glu69, Glu70, Glu73, and Glu76. An intrachain disulfide couples Cys61 to Cys66. Intrachain disulfides connect Cys91-Cys104, Cys109-Cys187, Cys130-Cys170, Cys158-Cys182, Cys215-Cys292, Cys236-Cys276, Cys264-Cys287, Cys332-Cys478, Cys387-Cys403, and Cys532-Cys546. Kringle domains follow at residues 109–187 (CAMD…IPVC) and 215–292 (CLLE…LNYC). Residues Asn120 and Asn144 are each glycosylated (N-linked (GlcNAc...) asparagine). The region spanning 360–614 (IVEGWDAEKG…LKRWMQKVID (255 aa)) is the Peptidase S1 domain. The active-site Charge relay system is His402. Residue Asn412 is glycosylated (N-linked (GlcNAc...) asparagine). Asp458 serves as the catalytic Charge relay system. The interval 547–569 (AGFKVNDTKRGDACEGDSGGPFV) is high affinity receptor-binding region which is also known as the TP508 peptide. N-linked (GlcNAc...) asparagine glycosylation occurs at Asn552. Cys560 and Cys590 are oxidised to a cystine. Ser564 serves as the catalytic Charge relay system.

Belongs to the peptidase S1 family. As to quaternary structure, heterodimer (named alpha-thrombin) of a light and a heavy chain; disulfide-linked. Forms a heterodimer with SERPINA5. In plasma, interacts (via N-terminus) with alpha-1-microglobulin; this interaction does not prevent the activation of prothrombin to thrombin. The gamma-carboxyglutamyl residues, which bind calcium ions, result from the carboxylation of glutamyl residues by a microsomal enzyme, the vitamin K-dependent carboxylase. The modified residues are necessary for the calcium-dependent interaction with a negatively charged phospholipid surface, which is essential for the conversion of prothrombin to thrombin. In terms of processing, in the penultimate step of the coagulation cascade, prothrombin is converted to thrombin by the prothrombinase complex composed of factor Xa (F10), cofactor Va (F5), and phospholipids. This activation requires factor Xa-catalyzed sequential cleavage at 2 sites, Arg-310 and Arg-359, along 2 possible pathways. In the first pathway, the first cleavage occurs at Arg-310, leading to the formation of the inactive intermediate prethrombin-2. This pathway preferentially occurs on platelets and in the absence of cofactor Va. In the second pathway, the first cleavage occurs at Arg-359, which separates protease domain into 2 chains that remain connected through a disulfide bond and generates the active intermediate meizothrombin. The presence of cofactor Va directs activation along the meizothrombin pathway and greatly accelerates the rate of cleavage at Arg-359, but has a smaller effect on the cleavage of meizothrombin at Arg-310. Meizothrombin accumulates as an intermediate when prothrombinase is assembled on the membrane of red blood cells.

The catalysed reaction is Selective cleavage of Arg-|-Gly bonds in fibrinogen to form fibrin and release fibrinopeptides A and B.. Its activity is regulated as follows. Activity is promoted in the presence of negatively charged surfaces, such as polyphosphate and dextran sulfate. Inhibited by SERPINA5. Thrombin, which cleaves bonds after Arg and Lys, converts fibrinogen to fibrin and activates factors V, VII, VIII, XIII, and, in complex with thrombomodulin, protein C. Functions in blood homeostasis, inflammation and wound healing. Activates coagulation factor XI (F11); activation is promoted by the contact with negatively charged surfaces. Triggers the production of pro-inflammatory cytokines, such as MCP-1/CCL2 and IL8/CXCL8, in endothelial cells. In Rattus norvegicus (Rat), this protein is Prothrombin (F2).